A 331-amino-acid chain; its full sequence is Fe-S cluster assembly protein DRE2 (331 aa).

Residues 1-146 (MSEILLLLHP…MPTFKKPVSS (146 aa)) are N-terminal SAM-like domain. Residues 142–164 (KPVSSPVTLTDTSANNTDAEDDL) form a disordered region. Residues 146–158 (SPVTLTDTSANNT) show a composition bias toward polar residues. The segment at 147–202 (PVTLTDTSANNTDAEDDLSMKRKLDSTKLAYFSDDSSGEEDDLIDENELIADSHKF) is linker. Cysteine 212, cysteine 224, cysteine 227, and cysteine 229 together coordinate [2Fe-2S] cluster. Residues 212–229 (CELPNGKKRKKACKDCTC) are fe-S binding site A. Residues cysteine 294, cysteine 297, cysteine 305, and cysteine 308 each coordinate [4Fe-4S] cluster. 2 short sequence motifs (cx2C motif) span residues 294-297 (CSSC) and 305-308 (CDGC). Residues 294–308 (CSSCALGDAFRCDGC) are fe-S binding site B.

It belongs to the anamorsin family. As to quaternary structure, monomer. Interacts with TAH18. Interacts with MIA40. The cofactor is [2Fe-2S] cluster. Requires [4Fe-4S] cluster as cofactor.

The protein localises to the cytoplasm. The protein resides in the mitochondrion intermembrane space. In terms of biological role, component of the cytosolic iron-sulfur (Fe-S) protein assembly (CIA) machinery required for the maturation of extramitochondrial Fe-S proteins. Part of an electron transfer chain functioning in an early step of cytosolic Fe-S biogenesis, facilitating the de novo assembly of a [4Fe-4S] cluster on the scaffold complex CFD1-NBP35. Electrons are transferred to DRE2 from NADPH via the FAD- and FMN-containing protein TAH18. TAH18-DRE2 are also required for the assembly of the diferric tyrosyl radical cofactor of ribonucleotide reductase (RNR), probably by providing electrons for reduction during radical cofactor maturation in the catalytic small subunit RNR2. The protein is Fe-S cluster assembly protein DRE2 of Clavispora lusitaniae (strain ATCC 42720) (Yeast).